The following is a 142-amino-acid chain: Hemoglobin subunit pi (142 aa).

The region spanning 2 to 142 (TLTQAEKAAV…VSSVLTEKYR (141 aa)) is the Globin domain. The heme b site is built by histidine 59 and histidine 88.

This sequence belongs to the globin family.

In terms of biological role, the pi' chain is the counterpart of the alpha chain in the major early embryonic hemoglobin P. In Cairina moschata (Muscovy duck), this protein is Hemoglobin subunit pi.